A 410-amino-acid polypeptide reads, in one-letter code: Schlafen-like protein 1 (410 aa).

2 disordered regions span residues 1-20 (MSLR…VMSQ) and 141-199 (LHHR…SGVR). A compositionally biased stretch (polar residues) spans 8–20 (AQTQMWESPVMSQ). Over residues 154-173 (SHSPGPSPGPSPGLRHPPLP) the composition is skewed to pro residues. An ATP-binding site is contributed by 264–271 (GVEDSGLV). The stretch at 370–401 (QKWAMELGKLEEKVKVLTLEKEQLQQQLRQRQ) forms a coiled coil.

The protein belongs to the Schlafen family. Subgroup I subfamily.

In Mus musculus (Mouse), this protein is Schlafen-like protein 1 (Slfnl1).